The following is a 929-amino-acid chain: uncharacterized protein (929 aa).

Residues 1 to 257 (MARKGKVNTL…SVLSSDDNDS (257 aa)) are disordered. Over residues 23 to 34 (KQLENKILHSYE) the composition is skewed to basic and acidic residues. 5 stretches are compositionally biased toward acidic residues: residues 35 to 50 (EESA…DNDE), 59 to 75 (SEDD…DEED), 107 to 117 (LNEEDDSDDSV), 133 to 144 (DENELVDLDTLL), and 188 to 220 (SESE…DGEN). Phosphoserine is present on residues serine 251, serine 555, and serine 557. The tract at residues 602–729 (DEMQAFEDEL…KADKKNHKLK (128 aa)) is disordered. The segment covering 605–619 (QAFEDELAGVPNEDD) has biased composition (acidic residues). Residues 670-681 (NKPEMKEGQKKA) show a composition bias toward basic and acidic residues. Over residues 696 to 711 (ETNPWLQVPDQRTSSA) the composition is skewed to polar residues. Residues 712–729 (KKLDKNSSKADKKNHKLK) are compositionally biased toward basic and acidic residues. Residues serine 758, serine 760, and serine 764 each carry the phosphoserine modification. The span at 805–820 (KEDWVQEDAPKEEDHS) shows a compositional bias: basic and acidic residues. Residues 805 to 843 (KEDWVQEDAPKEEDHSLPGWGSWGGVGVKQRKTKPKVKK) are disordered. Residues 833 to 843 (KQRKTKPKVKK) are compositionally biased toward basic residues.

It to yeast YML093w.

It localises to the nucleus. The protein localises to the nucleolus. This is an uncharacterized protein from Schizosaccharomyces pombe (strain 972 / ATCC 24843) (Fission yeast).